The sequence spans 292 residues: Ribosomal RNA small subunit methyltransferase A (292 aa).

S-adenosyl-L-methionine contacts are provided by N28, L30, G55, E76, D101, and N126.

The protein belongs to the class I-like SAM-binding methyltransferase superfamily. rRNA adenine N(6)-methyltransferase family. RsmA subfamily.

The protein localises to the cytoplasm. The catalysed reaction is adenosine(1518)/adenosine(1519) in 16S rRNA + 4 S-adenosyl-L-methionine = N(6)-dimethyladenosine(1518)/N(6)-dimethyladenosine(1519) in 16S rRNA + 4 S-adenosyl-L-homocysteine + 4 H(+). Functionally, specifically dimethylates two adjacent adenosines (A1518 and A1519) in the loop of a conserved hairpin near the 3'-end of 16S rRNA in the 30S particle. May play a critical role in biogenesis of 30S subunits. In Bacillus mycoides (strain KBAB4) (Bacillus weihenstephanensis), this protein is Ribosomal RNA small subunit methyltransferase A.